A 620-amino-acid chain; its full sequence is Glutathione-regulated potassium-efflux system protein KefC (620 aa).

12 helical membrane passes run His4–Val24, Leu26–Leu46, Ser54–Leu74, Gly90–Leu110, Val114–Met134, Phe149–Leu169, Met178–Leu198, Val218–Gly238, Gly270–Leu290, Leu294–Ile314, Trp327–Gln347, and Ser359–Asn379. One can recognise an RCK N-terminal domain in the interval Gln399 to Thr518. Positions Gly597 to Ser620 are disordered.

It belongs to the monovalent cation:proton antiporter 2 (CPA2) transporter (TC 2.A.37) family. KefC subfamily. In terms of assembly, homodimer. Interacts with the regulatory subunit KefF.

It is found in the cell inner membrane. Functionally, pore-forming subunit of a potassium efflux system that confers protection against electrophiles. Catalyzes K(+)/H(+) antiport. In Escherichia fergusonii (strain ATCC 35469 / DSM 13698 / CCUG 18766 / IAM 14443 / JCM 21226 / LMG 7866 / NBRC 102419 / NCTC 12128 / CDC 0568-73), this protein is Glutathione-regulated potassium-efflux system protein KefC.